The following is a 125-amino-acid chain: Large ribosomal subunit protein bL21 (125 aa).

It belongs to the bacterial ribosomal protein bL21 family. In terms of assembly, part of the 50S ribosomal subunit. Contacts protein L20.

In terms of biological role, this protein binds to 23S rRNA in the presence of protein L20. This chain is Large ribosomal subunit protein bL21, found in Synechococcus sp. (strain CC9311).